We begin with the raw amino-acid sequence, 190 residues long: MLLSDRDLRAEISAGRLGIDPFDDSLVQPSSVDVRLDCMFRVFNNTRYTHIDPAQRQDELTSVVEPTKGDPFVLHPGEFVLGSTLEIFSLPGDLAGRLEGKSSLGRLGLLTHSTAGFIDPGFSGHITLELSNVANLPITLWPGMKIGQLCILKLTSPSEHPYGSSGVGSKYQGQRGPTPSRSYQNFIRST.

Residues 101–106, aspartate 119, 127–129, glutamine 148, tyrosine 162, and glutamine 174 contribute to the dCTP site; these read KSSLGR and TLE. Residue glutamate 129 is the Proton donor/acceptor of the active site. The disordered stretch occupies residues 161-190; the sequence is PYGSSGVGSKYQGQRGPTPSRSYQNFIRST. The span at 171 to 190 shows a compositional bias: polar residues; it reads YQGQRGPTPSRSYQNFIRST.

The protein belongs to the dCTP deaminase family. Homotrimer.

It carries out the reaction dCTP + 2 H2O = dUMP + NH4(+) + diphosphate. The protein operates within pyrimidine metabolism; dUMP biosynthesis; dUMP from dCTP: step 1/1. Functionally, bifunctional enzyme that catalyzes both the deamination of dCTP to dUTP and the hydrolysis of dUTP to dUMP without releasing the toxic dUTP intermediate. The protein is dCTP deaminase, dUMP-forming of Mycobacterium marinum (strain ATCC BAA-535 / M).